The sequence spans 174 residues: Ribosome maturation factor RimM (174 aa).

In terms of domain architecture, PRC barrel spans 91–164 (DDAWYPHQLQ…KVVLSPPGGL (74 aa)).

It belongs to the RimM family. Binds ribosomal protein uS19.

The protein resides in the cytoplasm. Functionally, an accessory protein needed during the final step in the assembly of 30S ribosomal subunit, possibly for assembly of the head region. Essential for efficient processing of 16S rRNA. May be needed both before and after RbfA during the maturation of 16S rRNA. It has affinity for free ribosomal 30S subunits but not for 70S ribosomes. The polypeptide is Ribosome maturation factor RimM (Kineococcus radiotolerans (strain ATCC BAA-149 / DSM 14245 / SRS30216)).